The sequence spans 372 residues: Queuine tRNA-ribosyltransferase (372 aa).

The Proton acceptor role is filled by Asp92. Residues 92-96 (DSGGY), Asp146, Gln188, and Gly215 each bind substrate. The RNA binding stretch occupies residues 246 to 252 (GIGSLKE). Asp265 functions as the Nucleophile in the catalytic mechanism. The RNA binding; important for wobble base 34 recognition stretch occupies residues 270 to 274 (TRLGR). Residues Cys303, Cys305, Cys308, and His334 each coordinate Zn(2+).

Belongs to the queuine tRNA-ribosyltransferase family. In terms of assembly, homodimer. Within each dimer, one monomer is responsible for RNA recognition and catalysis, while the other monomer binds to the replacement base PreQ1. Zn(2+) serves as cofactor.

The catalysed reaction is 7-aminomethyl-7-carbaguanine + guanosine(34) in tRNA = 7-aminomethyl-7-carbaguanosine(34) in tRNA + guanine. It participates in tRNA modification; tRNA-queuosine biosynthesis. In terms of biological role, catalyzes the base-exchange of a guanine (G) residue with the queuine precursor 7-aminomethyl-7-deazaguanine (PreQ1) at position 34 (anticodon wobble position) in tRNAs with GU(N) anticodons (tRNA-Asp, -Asn, -His and -Tyr). Catalysis occurs through a double-displacement mechanism. The nucleophile active site attacks the C1' of nucleotide 34 to detach the guanine base from the RNA, forming a covalent enzyme-RNA intermediate. The proton acceptor active site deprotonates the incoming PreQ1, allowing a nucleophilic attack on the C1' of the ribose to form the product. After dissociation, two additional enzymatic reactions on the tRNA convert PreQ1 to queuine (Q), resulting in the hypermodified nucleoside queuosine (7-(((4,5-cis-dihydroxy-2-cyclopenten-1-yl)amino)methyl)-7-deazaguanosine). The protein is Queuine tRNA-ribosyltransferase of Prochlorococcus marinus (strain MIT 9301).